A 1444-amino-acid chain; its full sequence is ABC transporter G family member 39 (1444 aa).

The tract at residues 1-36 (MDIVRMGSVASGGGSVRRTASSWRGTSGRSDAFGRS) is disordered. Positions 19–29 (TASSWRGTSGR) are enriched in polar residues. An ABC transporter 1 domain is found at 154-426 (LSAMRIVSSG…FEAMGFKCPE (273 aa)). Residue 187-194 (GPPGSGKT) coordinates ATP. One can recognise an ABC transmembrane type-2 1 domain in the interval 504–717 (ELTKACFSRE…AQNAIAVNEF (214 aa)). 6 helical membrane passes run 522-542 (FVYI…MTVF), 555-575 (GAIF…NGFA), 610-630 (IPIS…VMGF), 642-662 (VLLV…AALG), 667-687 (VADT…GFLI), and 754-774 (IGVG…ILFL). The ABC transporter 2 domain occupies 846–1098 (ITFDNIRYSV…HLINYFEGIQ (253 aa)). 891–898 (GVSGAGKT) serves as a coordination point for ATP. Positions 1171-1385 (TQCMACLWKQ…TLYGLVASQY (215 aa)) constitute an ABC transmembrane type-2 2 domain. Helical transmembrane passes span 1192 to 1212 (ATRI…FLNL), 1220 to 1240 (LDLF…GIQN), 1278 to 1298 (IPHI…LIGF), 1305 to 1325 (FFWY…YGMM), 1335 to 1355 (IAAI…GFLI), 1362 to 1382 (IWWR…GLVA), and 1414 to 1434 (LGYV…VFAF).

Belongs to the ABC transporter superfamily. ABCG family. PDR (TC 3.A.1.205) subfamily.

Its subcellular location is the membrane. May be a general defense protein. The protein is ABC transporter G family member 39 of Oryza sativa subsp. japonica (Rice).